A 49-amino-acid chain; its full sequence is MRVKLTLACTECRQRNYNTMKNKKNDPDRLEMKKYCPFCHKHTLHKETK.

This sequence belongs to the bacterial ribosomal protein bL33 family.

This Clostridium acetobutylicum (strain ATCC 824 / DSM 792 / JCM 1419 / IAM 19013 / LMG 5710 / NBRC 13948 / NRRL B-527 / VKM B-1787 / 2291 / W) protein is Large ribosomal subunit protein bL33.